Consider the following 553-residue polypeptide: Effector protein HopAB2 (553 aa).

Disordered regions lie at residues 1-123, 198-227, and 239-275; these read MAGI…APRR, AVHQ…GSSQ, and APNQ…AAMR. The tract at residues 1-308 is host recognition; Pto interaction; that stretch reads MAGINRAGPS…LRTALERHVM (308 aa). Low complexity predominate over residues 24 to 39; that stretch reads SGQAHGSGSGASSSNS. Positions 47–60 are enriched in pro residues; that stretch reads SNTPPSNAPAPPPT. The segment covering 217-227 has biased composition (low complexity); that stretch reads SPAASSSGSSQ. A compositionally biased stretch (polar residues) spans 242 to 255; the sequence is QGRSSNTAASQTPV. An E3 ubiquitin-protein ligase region spans residues 309–553; it reads QRLPIPLDIG…IAKYAFRIVP (245 aa). An Interaction with Pto-kinase motif is present at residues 325–328; it reads GINP. The interval 361-380 is disordered; the sequence is APRPAVPVAPATASRRPDGT. A required for E3 ubiquitin-protein ligase and anti-PCD activities and pathogenesis region spans residues 512 to 529; the sequence is KDLAFMDMKKLAQFLAGK.

The protein belongs to the HopAB family. In terms of assembly, interacts physically with plant cell Pto. Auto-ubiquitinated.

The protein localises to the secreted. Functionally, effector protein involved in gene-for-gene resistance in tomato plants. It is recognized by the host Pto resistance protein and elicits Pto and Prf-dependent hypersensitive response (HR) and programmed cell death (PCD), resulting in host immunity. In susceptible plants, acts as a virulence factor by suppressing PCD and HR-based plant immunity. This function requires its E3 ubiquitin ligase activity probably by recruiting E2 enzymes and transferring ubiquitin molecules to cellular proteins involved in regulation of PCD and targeting them for degradation. Also, induces expression of host genes involved in ethylene biosynthesis and signaling, in particular ACO1 and ACO2, encoding the ethylene-forming enzyme ACC oxidase. This is Effector protein HopAB2 (hopAB2) from Pseudomonas syringae pv. tomato (strain ATCC BAA-871 / DC3000).